A 547-amino-acid chain; its full sequence is Agglutinin-1 (547 aa).

The first 20 residues, 1–20 (MKFETTKNKLHGNAYYQAQF), serve as a signal peptide directing secretion. Position 21 is a pyrrolidone carboxylic acid (glutamine 21). Residue glutamate 183 is part of the active site. Disulfide bonds link cysteine 266/cysteine 288, cysteine 305/cysteine 324, and cysteine 348/cysteine 365. Positions 279–280 (RS) are cleaved as a propeptide — linker peptide. Residues 292–419 (YEPTVRIGGR…YRMRQGWRTG (128 aa)) form the Ricin B-type lectin 1 domain. A 1-alpha repeat occupies 302–344 (DGLCVDVSDNAYNNGNPIILWKCKDQLEVNQLWTLKSDKTIRS). Residues 345–385 (KGKCLTTYGYAPGNYVMIYDCSSAVAEATYWDIWDNGTIIN) form a 1-beta repeat. N-linked (GlcNAc...) asparagine glycans are attached at residues asparagine 380 and asparagine 420. The 1-gamma repeat unit spans residues 388–420 (SGLVLSAESSSMGGTLTVQKNDYRMRQGWRTGN). One can recognise a Ricin B-type lectin 2 domain in the interval 422–546 (TSPFVTSIAG…GNANQMWATL (125 aa)). The 2-alpha repeat unit spans residues 433 to 468 (FKLCMEAHGNSMWLDVCDITKEEQQWAVYPDGSIRP). 2 disulfide bridges follow: cysteine 436/cysteine 449 and cysteine 475/cysteine 492. The 2-beta repeat unit spans residues 472 to 511 (TNNCLTCEEHKQGATIVMMGCSNAWASQRWVFKSDGTIYN). The 2-gamma repeat unit spans residues 514–547 (DDMVMDVKSSDPSLKQIILWPYTGNANQMWATLF).

In the N-terminal section; belongs to the ribosome-inactivating protein family. Type 2 RIP subfamily. As to quaternary structure, heterotetramer of two A and two B chains.

It carries out the reaction Endohydrolysis of the N-glycosidic bond at one specific adenosine on the 28S rRNA.. The A chain is responsible for inhibiting protein synthesis through the catalytic inactivation of 60S ribosomal subunits by removing adenine from position 4,324 of 28S rRNA. Less toxic than abrin-a. Functionally, the B chain is a galactose-specific lectin that facilitates the binding to the cell membrane that precedes endocytosis. The protein is Agglutinin-1 of Abrus precatorius (Indian licorice).